The following is a 259-amino-acid chain: Ribosomal RNA small subunit methyltransferase J (259 aa).

S-adenosyl-L-methionine-binding positions include 101–102 (RD), 117–118 (ER), 153–154 (SS), and D176.

This sequence belongs to the methyltransferase superfamily. RsmJ family.

It localises to the cytoplasm. The catalysed reaction is guanosine(1516) in 16S rRNA + S-adenosyl-L-methionine = N(2)-methylguanosine(1516) in 16S rRNA + S-adenosyl-L-homocysteine + H(+). Specifically methylates the guanosine in position 1516 of 16S rRNA. This is Ribosomal RNA small subunit methyltransferase J from Vibrio parahaemolyticus serotype O3:K6 (strain RIMD 2210633).